The chain runs to 124 residues: uncharacterized protein (124 aa).

A helical transmembrane segment spans residues 13 to 33; sequence IIFMALYFVITGIVIRLIGYS.

It is found in the membrane. This is an uncharacterized protein from Bacillus anthracis.